A 695-amino-acid polypeptide reads, in one-letter code: MKAPIPHLILLYATFTQSLKVVTKRGSADGCTDWSVDIKKYQVLVGEPVRIKCALFYGYIRTNYSLAQSAGLSLMWYKSSGPGDFEEPIAFDGSRMSKEEDSIWFRPTLLQDSGLYACVIRNSTYCMKVSISLTVGENDTGLCYNSKMKYFEKAELSKSKEISCRDIEDFLLPTREPEILWYKECRTKAWRPSIVFKRDTLLIKEVKEDDIGNYTCELKYGGFVVRRTTELTVTAPLTDKPPKLLYPMESKLTVQETQLGGSANLTCRAFFGYSGDVSPLIYWMKGEKFIEDLDENRVWESDIRILKEHLGEQEVSISLIVDSVEEGDLGNYSCYVENGNGRRHASVLLHKRELMYTVELAGGLGAILLLLICSVTIYKCYKIEIMLFYRNHFGAEELDGDNKDYDAYLSYTKVDPDQWNQETGEEERFALEILPDMLEKHYGYKLFIPDRDLIPTGNIEDVARCVDQSKRLIIVMTPNYVVRRGWSIFELETRLRNMLVTGEIKVILIECSELRGIMNYQEVEALKHTIKLLTVIKWHGPKCNKLNSKFWKRLQYEMPFKRIEPITHEQALDVSEQGPFGELQTVSAISMAAATSTALATAHPDLRSTFHNTYHSQMRQKHYYRSYEYDVPPTGTLPLTSIGNQHTYCNIPMTLINGQRPQTKSNREPNPDEAHTNSAILPLLPRETSISSVIW.

The N-terminal stretch at 1-24 is a signal peptide; it reads MKAPIPHLILLYATFTQSLKVVTK. In terms of domain architecture, Ig-like C2-type 1 spans 25–134; it reads RGSADGCTDW…YCMKVSISLT (110 aa). Residues 25 to 357 lie on the Extracellular side of the membrane; sequence RGSADGCTDW…LLHKRELMYT (333 aa). 2 cysteine pairs are disulfide-bonded: cysteine 31-cysteine 126 and cysteine 53-cysteine 118. 3 N-linked (GlcNAc...) asparagine glycosylation sites follow: asparagine 63, asparagine 122, and asparagine 138. 2 disulfide bridges follow: cysteine 143-cysteine 185 and cysteine 164-cysteine 216. Ig-like C2-type domains lie at 143–232 and 242–350; these read CYNS…TELT and PKLL…VLLH. N-linked (GlcNAc...) asparagine glycans are attached at residues asparagine 213, asparagine 264, and asparagine 331. The cysteines at positions 267 and 334 are disulfide-linked. The chain crosses the membrane as a helical span at residues 358–378; it reads VELAGGLGAILLLLICSVTIY. The Cytoplasmic portion of the chain corresponds to 379 to 695; that stretch reads KCYKIEIMLF…RETSISSVIW (317 aa). The region spanning 403–558 is the TIR domain; sequence KDYDAYLSYT…KFWKRLQYEM (156 aa). The active site involves glutamate 490. The tract at residues 548–643 is interaction with NCS1; that stretch reads SKFWKRLQYE…TGTLPLTSIG (96 aa). Positions 657–679 are disordered; it reads NGQRPQTKSNREPNPDEAHTNSA. A compositionally biased stretch (basic and acidic residues) spans 665–675; sequence SNREPNPDEAH.

This sequence belongs to the interleukin-1 receptor family. Homodimer. Interacts (calcium-independent) with NCS1/FREQ. Interacts (via the first immunoglobilin domain) with PTPRD (via the second immunoglobilin domain); this interaction is PTPRD-splicing-dependent and induces pre- and post-synaptic differentiation of neurons and is required for IL1RAPL1-mediated synapse formation. Detected in total brain extracts, olfactory bulb, hippocampus and striatum (at protein level).

It localises to the cell membrane. It is found in the cytoplasm. The protein resides in the cell projection. Its subcellular location is the axon. The protein localises to the dendrite. It carries out the reaction NAD(+) + H2O = ADP-D-ribose + nicotinamide + H(+). Functionally, may regulate secretion and presynaptic differentiation through inhibition of the activity of N-type voltage-gated calcium channel. May activate the MAP kinase JNK. Plays a role in neurite outgrowth. During dendritic spine formation can bidirectionally induce pre- and post-synaptic differentiation of neurons by trans-synaptically binding to PTPRD. This is Interleukin-1 receptor accessory protein-like 1 (Il1rapl1) from Mus musculus (Mouse).